The chain runs to 513 residues: 2,3-bisphosphoglycerate-independent phosphoglycerate mutase (513 aa).

Mn(2+) is bound by residues D15 and S65. S65 functions as the Phosphoserine intermediate in the catalytic mechanism. Substrate-binding positions include H126, R156–D157, R188, R194, R263–R266, and K337. 5 residues coordinate Mn(2+): D402, H406, D443, H444, and H461.

Belongs to the BPG-independent phosphoglycerate mutase family. As to quaternary structure, monomer. The cofactor is Mn(2+).

The catalysed reaction is (2R)-2-phosphoglycerate = (2R)-3-phosphoglycerate. Its pathway is carbohydrate degradation; glycolysis; pyruvate from D-glyceraldehyde 3-phosphate: step 3/5. In terms of biological role, catalyzes the interconversion of 2-phosphoglycerate and 3-phosphoglycerate. In Moorella thermoacetica (strain ATCC 39073 / JCM 9320), this protein is 2,3-bisphosphoglycerate-independent phosphoglycerate mutase.